A 309-amino-acid chain; its full sequence is Ribosomal RNA small subunit methyltransferase H (309 aa).

S-adenosyl-L-methionine is bound by residues 33-35 (GGH), Asp53, Phe79, Asp100, and Gln107.

This sequence belongs to the methyltransferase superfamily. RsmH family.

The protein resides in the cytoplasm. The catalysed reaction is cytidine(1402) in 16S rRNA + S-adenosyl-L-methionine = N(4)-methylcytidine(1402) in 16S rRNA + S-adenosyl-L-homocysteine + H(+). Its function is as follows. Specifically methylates the N4 position of cytidine in position 1402 (C1402) of 16S rRNA. This is Ribosomal RNA small subunit methyltransferase H from Clostridium botulinum (strain 657 / Type Ba4).